Consider the following 585-residue polypeptide: MSPPSATAGDINHREVDPTIWRACAGASVQIPVLHSRVYYFPQGHVEHCCPLLSTLPSSTSPVPCIITSIQLLADPVTDEVFAHLILQPMTQQQFTPTNYSRFGRFDGDVDDNNKVTTFAKILTPSDANNGGGFSVPRFCADSVFPLLNFQIDPPVQKLYVTDIHGAVWDFRHIYRGTPRRHLLTTGWSKFVNSKKLIAGDSVVFMRKSADEMFIGVRRTPISSSDGGSSYYGGDEYNGYYSQSSVAKEDDGSPKKTFRRSGNGKLTAEAVTDAINRASQGLPFEVVFYPAAGWSEFVVRAEDVESSMSMYWTPGTRVKMAMETEDSSRITWFQGIVSSTYQETGPWRGSPWKQLQITWDEPEILQNVKRVNPWQVEIAAHATQLHTPFPPAKRLKYPQPGGGFLSGDDGEILYPQSGLSSAAAPDPSPSMFSYSTFPAGMQGARQYDFGSFNPTGFIGGNPPQLFTNNFLSPLPDLGKVSTEMMNFGSPPSDNLSPNSNTTNLSSGNDLVGNRGPLSKKVNSIQLFGKIITVEEHSESGPAESGLCEEDGSKESSDNETQLSLSHAPPSVPKHSNSNAGSSSQG.

The segment at residues 119-221 is a DNA-binding region (TF-B3); that stretch reads FAKILTPSDA…EMFIGVRRTP (103 aa). 2 disordered regions span residues 483–517 and 535–585; these read EMMN…RGPL and EHSE…SSQG. Residues 488-510 show a composition bias toward low complexity; the sequence is GSPPSDNLSPNSNTTNLSSGNDL. Polar residues predominate over residues 573–585; it reads KHSNSNAGSSSQG.

This sequence belongs to the ARF family. As to quaternary structure, homo and heterodimers.

It localises to the nucleus. Its function is as follows. Auxin response factors (ARFs) are transcriptional factors that bind specifically to the DNA sequence 5'-TGTCTC-3' found in the auxin-responsive promoter elements (AuxREs). Could act as transcriptional activator or repressor. Formation of heterodimers with Aux/IAA proteins may alter their ability to modulate early auxin response genes expression. In Arabidopsis thaliana (Mouse-ear cress), this protein is Auxin response factor 17 (ARF17).